Here is a 75-residue protein sequence, read N- to C-terminus: Protein SlyX homolog (75 aa).

The disordered stretch occupies residues 56-75 (KNMDSSNMEDPANEPPPPHY).

This sequence belongs to the SlyX family.

In Vibrio parahaemolyticus serotype O3:K6 (strain RIMD 2210633), this protein is Protein SlyX homolog.